Here is a 170-residue protein sequence, read N- to C-terminus: Probable T4-type lysozyme 1 (170 aa).

Glu-13 acts as the Proton donor in catalysis. The Nucleophile role is filled by Asp-22.

Belongs to the glycosyl hydrolase 24 family.

The catalysed reaction is Hydrolysis of (1-&gt;4)-beta-linkages between N-acetylmuramic acid and N-acetyl-D-glucosamine residues in a peptidoglycan and between N-acetyl-D-glucosamine residues in chitodextrins.. The polypeptide is Probable T4-type lysozyme 1 (Dictyostelium discoideum (Social amoeba)).